We begin with the raw amino-acid sequence, 50 residues long: Penaeidin-1 (50 aa).

3 disulfides stabilise this stretch: C25/C38, C27/C45, and C39/C46.

As to expression, higher expression in hemocytes and to a lesser extent in heart, testis, gills, intestine, lymphoid organ and hepatopancreas. Traces in eyes and subcuticular epithelium. Not present in the brain.

The protein localises to the cytoplasmic granule. In terms of biological role, antibacterial activity against M.luteus and E.coli bacteria. Antifungal activity against N.crassa and F.oxysporum. Presents chitin-binding activity. This Penaeus vannamei (Whiteleg shrimp) protein is Penaeidin-1.